Reading from the N-terminus, the 717-residue chain is Delta-1-pyrroline-5-carboxylate synthase (717 aa).

The segment at 1–296 (MDAVDSTRAF…WAPVGDVGAR (296 aa)) is glutamate 5-kinase. Positions 60, 157, and 176 each coordinate substrate. ATP contacts are provided by residues 196 to 197 (SD) and 236 to 242 (RGGMTAK). Residues 297 to 717 (DMAVAARESS…YTHKDLTSHA (421 aa)) are gamma-glutamyl phosphate reductase.

This sequence in the N-terminal section; belongs to the glutamate 5-kinase family. It in the C-terminal section; belongs to the gamma-glutamyl phosphate reductase family. Expressed at high levels in leaves and is inducible in roots subjected to salt stress.

It carries out the reaction L-glutamate + ATP = L-glutamyl 5-phosphate + ADP. It catalyses the reaction L-glutamate 5-semialdehyde + phosphate + NADP(+) = L-glutamyl 5-phosphate + NADPH + H(+). Its pathway is amino-acid biosynthesis; L-proline biosynthesis; L-glutamate 5-semialdehyde from L-glutamate: step 1/2. The protein operates within amino-acid biosynthesis; L-proline biosynthesis; L-glutamate 5-semialdehyde from L-glutamate: step 2/2. With respect to regulation, feedback regulated by proline. In terms of biological role, P5CS plays a key role in proline biosynthesis, leading to osmoregulation in plants. This chain is Delta-1-pyrroline-5-carboxylate synthase, found in Actinidia deliciosa (Kiwi).